The chain runs to 486 residues: Adenylate kinase 8 (486 aa).

2 adenylate kinase regions span residues 58–258 (PRII…NFIC) and 269–471 (PRIL…SRLV). 67 to 72 (ASGKKT) contributes to the ATP binding site. Residues 87–112 (TFCDILKDDSDLTRAAQSYYDKKQNV) form an NMP 1 region. AMP-binding positions include 139–142 (AIPK) and R202. Residues 176–205 (GKRIDPVTGDVYHVTFMWPESEEVAQRLET) form an LID 1 region. Residue 278 to 283 (GAGRNL) participates in ATP binding. Residues 298 to 327 (CCGELLKAVSADESHMGELIKPYLESEQQV) form an NMP 2 region. AMP contacts are provided by residues 325–327 (QQV) and 354–357 (GFPR). The LID 2 stretch occupies residues 391–424 (LRAVDPVTGEWYHSVYKPPPGPEVQARLRFNPQH). R392 is an ATP binding site. R432 is an AMP binding site.

Belongs to the adenylate kinase family.

It localises to the cytoplasm. It is found in the cytosol. The enzyme catalyses AMP + ATP = 2 ADP. It carries out the reaction a 2'-deoxyribonucleoside 5'-diphosphate + ATP = a 2'-deoxyribonucleoside 5'-triphosphate + ADP. The catalysed reaction is a ribonucleoside 5'-diphosphate + ATP = a ribonucleoside 5'-triphosphate + ADP. Nucleoside monophosphate (NMP) kinase that catalyzes the reversible transfer of the terminal phosphate group between nucleoside triphosphates and monophosphates. Has highest activity toward AMP, and weaker activity toward dAMP, CMP and dCMP. Also displays broad nucleoside diphosphate kinase activity. This chain is Adenylate kinase 8 (ak8), found in Danio rerio (Zebrafish).